Reading from the N-terminus, the 122-residue chain is T cell receptor gamma variable 9 (122 aa).

An N-terminal signal peptide occupies residues 1 to 20 (MLSLLHTSTLAVLGALCVYG). An Ig-like domain is found at 27–122 (PQISSTKTLS…ATYYCALWEV (96 aa)). A disulfide bridge links Cys43 with Cys117.

As to quaternary structure, gamma-delta TR is a heterodimer composed of a gamma and delta chain; disulfide-linked. The gamma-delta TR is associated with the transmembrane signaling CD3 coreceptor proteins following the stoichiometry: a single gamma-delta TR heterodimer associates with one CD3D-CD3E heterodimer, one CD3G-CD3E heterodimer and one CD247 homodimer forming a stable octameric structure. Upon activation, gamma-delta TR complex associates with FCER1G to initiate intracellular signaling.

The protein resides in the cell membrane. Its function is as follows. V region of the variable domain of T cell receptor (TR) gamma chain that participates in the antigen recognition. Gamma-delta TRs recognize a variety of self and foreign non-peptide antigens frequently expressed at the epithelial boundaries between the host and external environment, including endogenous lipids presented by MH-like protein CD1D and phosphoantigens presented by butyrophilin-like molecule BTN3A1. Upon antigen recognition induces rapid, innate-like immune responses involved in pathogen clearance and tissue repair. Binding of gamma-delta TR complex to antigen triggers phosphorylation of immunoreceptor tyrosine-based activation motifs (ITAMs) in the CD3 chains by the LCK and FYN kinases, allowing the recruitment, phosphorylation, and activation of ZAP70 that facilitates phosphorylation of the scaffolding proteins LCP2 and LAT. This lead to the formation of a supramolecular signalosome that recruits the phospholipase PLCG1, resulting in calcium mobilization and ERK activation, ultimately leading to T cell expansion and differentiation into effector cells. Gamma-delta TRs are produced through somatic rearrangement of a limited repertoire of variable (V), diversity (D), and joining (J) genes. The potential diversity of gamma-delta TRs is conferred by the unique ability to rearrange (D) genes in tandem and to utilize all three reading frames. The combinatorial diversity is considerably increased by the sequence exonuclease trimming and random nucleotide (N) region additions which occur during the V-(D)-J rearrangements. The protein is T cell receptor gamma variable 9 of Homo sapiens (Human).